The sequence spans 468 residues: ATP synthase subunit beta (468 aa).

155–162 (GGAGVGKT) contacts ATP.

This sequence belongs to the ATPase alpha/beta chains family. As to quaternary structure, F-type ATPases have 2 components, CF(1) - the catalytic core - and CF(0) - the membrane proton channel. CF(1) has five subunits: alpha(3), beta(3), gamma(1), delta(1), epsilon(1). CF(0) has three main subunits: a(1), b(2) and c(9-12). The alpha and beta chains form an alternating ring which encloses part of the gamma chain. CF(1) is attached to CF(0) by a central stalk formed by the gamma and epsilon chains, while a peripheral stalk is formed by the delta and b chains.

It localises to the cell membrane. It carries out the reaction ATP + H2O + 4 H(+)(in) = ADP + phosphate + 5 H(+)(out). In terms of biological role, produces ATP from ADP in the presence of a proton gradient across the membrane. The catalytic sites are hosted primarily by the beta subunits. The sequence is that of ATP synthase subunit beta from Streptococcus equi subsp. zooepidemicus (strain H70).